We begin with the raw amino-acid sequence, 670 residues long: UvrABC system protein B (670 aa).

The 158-residue stretch at 26 to 183 (EGLENGLAHQ…RRLSELQYSR (158 aa)) folds into the Helicase ATP-binding domain. 39–46 (GVTGSGKT) lines the ATP pocket. The short motif at 92–115 (YYDYYQPEAYVPSSDTFIEKDASV) is the Beta-hairpin element. The 167-residue stretch at 431 to 597 (QVDDLLSEIR…GLNKKIGDIL (167 aa)) folds into the Helicase C-terminal domain. A disordered region spans residues 600-620 (GQPSTRGKGKGRGGKVADTNN). One can recognise a UVR domain in the interval 630–665 (DQKIRELEAKMYTHAQNLEFEQAAELRDQVHQLRQQ).

Belongs to the UvrB family. In terms of assembly, forms a heterotetramer with UvrA during the search for lesions. Interacts with UvrC in an incision complex.

The protein localises to the cytoplasm. Its function is as follows. The UvrABC repair system catalyzes the recognition and processing of DNA lesions. A damage recognition complex composed of 2 UvrA and 2 UvrB subunits scans DNA for abnormalities. Upon binding of the UvrA(2)B(2) complex to a putative damaged site, the DNA wraps around one UvrB monomer. DNA wrap is dependent on ATP binding by UvrB and probably causes local melting of the DNA helix, facilitating insertion of UvrB beta-hairpin between the DNA strands. Then UvrB probes one DNA strand for the presence of a lesion. If a lesion is found the UvrA subunits dissociate and the UvrB-DNA preincision complex is formed. This complex is subsequently bound by UvrC and the second UvrB is released. If no lesion is found, the DNA wraps around the other UvrB subunit that will check the other stand for damage. In Yersinia enterocolitica serotype O:8 / biotype 1B (strain NCTC 13174 / 8081), this protein is UvrABC system protein B.